The chain runs to 61 residues: MKAIIFLFAVLTVVAIIIPIISGEPNAGPLAASIDLKQIMEKVKPDLLKMLDDIKAKIQQG.

The signal sequence occupies residues 1–23 (MKAIIFLFAVLTVVAIIIPIISG). Positions 24-33 (EPNAGPLAAS) are excised as a propeptide. The residue at position 60 (Gln-60) is a Glutamine amide.

It belongs to the formicidae venom clade 2 family. In terms of tissue distribution, expressed by the venom gland.

The protein localises to the secreted. Functionally, toxin that causes a rapid and irreversible paralysis when intrathoracically injected into insects (blowflies). Does not cause spontaneous nocifensive behaviors by intraplantar injection in mice. The sequence is that of Myrmicitoxin(1)-Pm5a from Pogonomyrmex maricopa (Maricopa harvester ant).